We begin with the raw amino-acid sequence, 294 residues long: StAR-related lipid transfer protein 3 (294 aa).

In terms of domain architecture, MENTAL spans 1 to 66; that stretch reads DGYICNNGMD…YSPPESLAGS (66 aa). The FFAT motif lies at 55–61; sequence QFYSPPE. Residues 58-77 are disordered; it reads SPPESLAGSEEDLDEEGLGR. Positions 79 to 292 constitute an START domain; the sequence is AVSPQEKALV…LRQRIRDLRS (214 aa).

Belongs to the STARD3 family. Homodimer. In terms of processing, phosphorylated. Phosphorylation allows the tethering of two membranes that participates in the formation of ER-endosome contacts. Phosphorylation of FFAT motif drives membrane tethering between the endoplasmic reticulum and late endosomes that in turn allows the efficient transport of sterol mediated by the START domain.

The protein resides in the late endosome membrane. The enzyme catalyses cholesterol(in) = cholesterol(out). Functionally, sterol-binding protein that mediates cholesterol transport from the endoplasmic reticulum to endosomes. The sterol transport mechanism is triggered by phosphorylation of FFAT motif that leads to membrane tethering between the endoplasmic reticulum and late endosomes. Acts as a lipid transfer protein that redirects sterol to the endosome at the expense of the cell membrane and favors membrane formation inside endosomes. In Salvelinus fontinalis (Brook trout), this protein is StAR-related lipid transfer protein 3.